Reading from the N-terminus, the 427-residue chain is Serine--tRNA ligase (427 aa).

231-233 (TAE) lines the L-serine pocket. Residue 262 to 264 (RSE) participates in ATP binding. Glu-285 is an L-serine binding site. 349–352 (EISS) contacts ATP. An L-serine-binding site is contributed by Ser-385.

Belongs to the class-II aminoacyl-tRNA synthetase family. Type-1 seryl-tRNA synthetase subfamily. In terms of assembly, homodimer. The tRNA molecule binds across the dimer.

It is found in the cytoplasm. It carries out the reaction tRNA(Ser) + L-serine + ATP = L-seryl-tRNA(Ser) + AMP + diphosphate + H(+). The enzyme catalyses tRNA(Sec) + L-serine + ATP = L-seryl-tRNA(Sec) + AMP + diphosphate + H(+). The protein operates within aminoacyl-tRNA biosynthesis; selenocysteinyl-tRNA(Sec) biosynthesis; L-seryl-tRNA(Sec) from L-serine and tRNA(Sec): step 1/1. Functionally, catalyzes the attachment of serine to tRNA(Ser). Is also able to aminoacylate tRNA(Sec) with serine, to form the misacylated tRNA L-seryl-tRNA(Sec), which will be further converted into selenocysteinyl-tRNA(Sec). The sequence is that of Serine--tRNA ligase from Sinorhizobium fredii (strain NBRC 101917 / NGR234).